The primary structure comprises 628 residues: ATP-dependent RNA helicase mrh4, mitochondrial (628 aa).

A mitochondrion-targeting transit peptide spans Met-1 to Lys-40. A disordered region spans residues Ala-51–Tyr-109. The span at Arg-92–Asp-105 shows a compositional bias: basic and acidic residues. A Q motif motif is present at residues Thr-137–Arg-170. The 213-residue stretch at Glu-190–Leu-402 folds into the Helicase ATP-binding domain. Position 203–210 (Ala-203–Thr-210) interacts with ATP. The segment covering Asp-228–Asp-253 has biased composition (basic and acidic residues). A disordered region spans residues Asp-228–Pro-260. Positions Asp-349–Asp-352 match the DEAD box motif. One can recognise a Helicase C-terminal domain in the interval Tyr-456–Ile-628.

The protein belongs to the DEAD box helicase family. MRH4 subfamily.

The protein resides in the mitochondrion. The enzyme catalyses ATP + H2O = ADP + phosphate + H(+). In terms of biological role, ATP-binding RNA helicase involved in mitochondrial RNA metabolism. Required for maintenance of mitochondrial DNA. This Aspergillus oryzae (strain ATCC 42149 / RIB 40) (Yellow koji mold) protein is ATP-dependent RNA helicase mrh4, mitochondrial (mrh4).